The primary structure comprises 286 residues: Shikimate dehydrogenase (NADP(+)) (286 aa).

Shikimate is bound by residues 20–22 (SLS) and Ser67. Residue Lys71 is the Proton acceptor of the active site. Shikimate is bound by residues Asn92 and Asp107. Residues 131–135 (GGGGA) and Ala230 each bind NADP(+). Tyr232 lines the shikimate pocket. Residue Gly253 coordinates NADP(+).

This sequence belongs to the shikimate dehydrogenase family. In terms of assembly, homodimer.

The catalysed reaction is shikimate + NADP(+) = 3-dehydroshikimate + NADPH + H(+). It participates in metabolic intermediate biosynthesis; chorismate biosynthesis; chorismate from D-erythrose 4-phosphate and phosphoenolpyruvate: step 4/7. Functionally, involved in the biosynthesis of the chorismate, which leads to the biosynthesis of aromatic amino acids. Catalyzes the reversible NADPH linked reduction of 3-dehydroshikimate (DHSA) to yield shikimate (SA). This Lactococcus lactis subsp. cremoris (strain MG1363) protein is Shikimate dehydrogenase (NADP(+)).